Consider the following 306-residue polypeptide: tRNA N6-adenosine threonylcarbamoyltransferase (306 aa).

The Fe cation site is built by histidine 110 and histidine 114. Residues 132 to 136 (IASGK), aspartate 165, glycine 178, aspartate 182, and asparagine 268 each bind substrate. Aspartate 292 is a binding site for Fe cation.

The protein belongs to the KAE1 / TsaD family. Fe(2+) serves as cofactor.

The protein localises to the cytoplasm. It catalyses the reaction L-threonylcarbamoyladenylate + adenosine(37) in tRNA = N(6)-L-threonylcarbamoyladenosine(37) in tRNA + AMP + H(+). In terms of biological role, required for the formation of a threonylcarbamoyl group on adenosine at position 37 (t(6)A37) in tRNAs that read codons beginning with adenine. Is involved in the transfer of the threonylcarbamoyl moiety of threonylcarbamoyl-AMP (TC-AMP) to the N6 group of A37, together with TsaE and TsaB. TsaD likely plays a direct catalytic role in this reaction. The protein is tRNA N6-adenosine threonylcarbamoyltransferase of Malacoplasma penetrans (strain HF-2) (Mycoplasma penetrans).